The chain runs to 246 residues: Probable transcriptional regulatory protein CTC_02215 (246 aa).

It belongs to the TACO1 family.

The protein resides in the cytoplasm. This Clostridium tetani (strain Massachusetts / E88) protein is Probable transcriptional regulatory protein CTC_02215.